A 549-amino-acid polypeptide reads, in one-letter code: Chaperonin GroEL (549 aa).

Residues 30–33 (TLGP), Lys-51, 87–91 (DGTTT), Gly-415, and Asp-495 contribute to the ATP site.

Belongs to the chaperonin (HSP60) family. Forms a cylinder of 14 subunits composed of two heptameric rings stacked back-to-back. Interacts with the co-chaperonin GroES.

It is found in the cytoplasm. It catalyses the reaction ATP + H2O + a folded polypeptide = ADP + phosphate + an unfolded polypeptide.. Its function is as follows. Together with its co-chaperonin GroES, plays an essential role in assisting protein folding. The GroEL-GroES system forms a nano-cage that allows encapsulation of the non-native substrate proteins and provides a physical environment optimized to promote and accelerate protein folding. The protein is Chaperonin GroEL of Colwellia maris.